A 455-amino-acid chain; its full sequence is Serine--tRNA ligase (455 aa).

252–254 is an L-serine binding site; it reads TAE. Residues 283–285 and valine 299 each bind ATP; that span reads RKE. Glutamate 306 contacts L-serine. ATP is bound at residue 370–373; that stretch reads EVVS. Residue threonine 406 participates in L-serine binding.

It belongs to the class-II aminoacyl-tRNA synthetase family. Type-1 seryl-tRNA synthetase subfamily. As to quaternary structure, homodimer. The tRNA molecule binds across the dimer.

The protein resides in the cytoplasm. It carries out the reaction tRNA(Ser) + L-serine + ATP = L-seryl-tRNA(Ser) + AMP + diphosphate + H(+). The catalysed reaction is tRNA(Sec) + L-serine + ATP = L-seryl-tRNA(Sec) + AMP + diphosphate + H(+). Its pathway is aminoacyl-tRNA biosynthesis; selenocysteinyl-tRNA(Sec) biosynthesis; L-seryl-tRNA(Sec) from L-serine and tRNA(Sec): step 1/1. Its function is as follows. Catalyzes the attachment of serine to tRNA(Ser). Is also able to aminoacylate tRNA(Sec) with serine, to form the misacylated tRNA L-seryl-tRNA(Sec), which will be further converted into selenocysteinyl-tRNA(Sec). In Pyrococcus abyssi (strain GE5 / Orsay), this protein is Serine--tRNA ligase.